We begin with the raw amino-acid sequence, 142 residues long: uncharacterized protein (142 aa).

Residues 1-120 enclose the N-acetyltransferase domain; the sequence is MADKFDANDE…TILKWEKNMD (120 aa).

Belongs to the acetyltransferase family.

This is an uncharacterized protein from Streptococcus pyogenes serotype M3 (strain ATCC BAA-595 / MGAS315).